The following is a 461-amino-acid chain: Cysteine--tRNA ligase (461 aa).

C28 serves as a coordination point for Zn(2+). The 'HIGH' region signature appears at 30 to 40 (ITVYDLCHIGH). Zn(2+)-binding residues include C209, H234, and E238. A 'KMSKS' region motif is present at residues 266–270 (KMSKS). K269 lines the ATP pocket.

Belongs to the class-I aminoacyl-tRNA synthetase family. Monomer. The cofactor is Zn(2+).

The protein localises to the cytoplasm. It catalyses the reaction tRNA(Cys) + L-cysteine + ATP = L-cysteinyl-tRNA(Cys) + AMP + diphosphate. The polypeptide is Cysteine--tRNA ligase (Escherichia coli O127:H6 (strain E2348/69 / EPEC)).